Here is an 82-residue protein sequence, read N- to C-terminus: MSHLPLHHPAAVVTLRPLRPRAAVATRLRRHRLAGGPTRRLRRRPAVTRRRRPDRRFVRCRPSPTRRGLPGCWRHSSTGPHT.

Basic residues predominate over residues 35-54 (GGPTRRLRRRPAVTRRRRPD). The disordered stretch occupies residues 35 to 82 (GGPTRRLRRRPAVTRRRRPDRRFVRCRPSPTRRGLPGCWRHSSTGPHT).

It localises to the cytoplasm. In Mycobacterium tuberculosis (strain ATCC 25618 / H37Rv), this protein is Protein Rv1078A.